The chain runs to 70 residues: Conotoxin Cal6.11 (70 aa).

The first 22 residues, 1-22 (MKLTCVLIIAVLILTACQFIAA), serve as a signal peptide directing secretion. Positions 23–43 (DNTEYRKWRRSGTSTGMRLGS) are excised as a propeptide. Cystine bridges form between Cys46–Cys57, Cys50–Cys62, and Cys56–Cys69. Residues Pro48 and Pro58 each carry the 4-hydroxyproline modification. A 4-carboxyglutamate mark is found at Glu60 and Glu67.

The protein belongs to the conotoxin O1 superfamily. As to expression, expressed by the venom duct.

The protein resides in the secreted. In terms of biological role, probable neurotoxin with unknown target. Possibly targets ion channels. The sequence is that of Conotoxin Cal6.11 from Californiconus californicus (California cone).